The following is a 406-amino-acid chain: Protein ALP1-like (406 aa).

A Nuclear localization signal motif is present at residues 8 to 15 (KKKKRAEK). The DDE Tnp4 domain maps to 187–353 (IDITHIVMNL…IIFVCCLLHN (167 aa)). A divalent metal cation is bound by residues Asp188, Asp240, and Asp279.

Belongs to the HARBI1 family. A divalent metal cation is required as a cofactor.

The protein localises to the nucleus. In terms of biological role, transposase-derived protein that may have nuclease activity. This is Protein ALP1-like from Arabidopsis thaliana (Mouse-ear cress).